Reading from the N-terminus, the 88-residue chain is MIKVPAYMYVLECSDGTLYTGYTTDVKRRLNTHNTGKGAKYTRARLPVKLLYSEAFNSKQEAMRAEALFKQKTRQAKLTYIKQHKNEQ.

The GIY-YIG domain occupies 4–80; sequence VPAYMYVLEC…QKTRQAKLTY (77 aa).

It belongs to the UPF0213 family.

The polypeptide is UPF0213 protein SAG0778 (Streptococcus agalactiae serotype V (strain ATCC BAA-611 / 2603 V/R)).